We begin with the raw amino-acid sequence, 443 residues long: Porin D (443 aa).

The signal sequence occupies residues 1–23 (MKVMKWSAIALAVSAGSTQFAVA). Catalysis depends on residues histidine 179, aspartate 231, and serine 319.

The protein belongs to the outer membrane porin (Opr) (TC 1.B.25) family.

The protein localises to the cell outer membrane. Functionally, porin with a specificity for basic amino acids. Involved in facilitated diffusion of carbapenem beta-lactam antibiotics, such as imipenem and meropenem. Also possesses serine protease activity. This chain is Porin D (oprD), found in Pseudomonas aeruginosa (strain ATCC 15692 / DSM 22644 / CIP 104116 / JCM 14847 / LMG 12228 / 1C / PRS 101 / PAO1).